The following is a 668-amino-acid chain: Kinesin-like protein KIF2B (668 aa).

Phosphothreonine; by PLK1 is present on threonine 125. A coiled-coil region spans residues 149–177; that stretch reads CLREIEKLQKQREKRRRLQLEIRARRALD. Phosphoserine; by PLK1 is present on serine 204. Residues 213–543 enclose the Kinesin motor domain; that stretch reads RICVCVRKRP…LRYANRVKEL (331 aa). 303–310 is an ATP binding site; the sequence is GQTGSGKT. The segment covering 585-604 has biased composition (basic and acidic residues); the sequence is PTVEKEEEKESDELTSKKEP. Positions 585 to 605 are disordered; it reads PTVEKEEEKESDELTSKKEPA. Positions 646–667 form a coiled coil; sequence VLTDIQKKLQSLREDLQKKSQV.

Belongs to the TRAFAC class myosin-kinesin ATPase superfamily. Kinesin family. MCAK/KIF2 subfamily. Phosphorylation at Thr-125 by PLK1 is required for activity in the correction of kinetochore-microtubules attachment errors, while phosphorylation at Ser-204 also by PLK1 is required for the kinetochore localization and activity in prometaphase.

It is found in the cytoplasm. Its subcellular location is the cytoskeleton. The protein localises to the microtubule organizing center. The protein resides in the centrosome. It localises to the spindle. It is found in the chromosome. Its subcellular location is the centromere. The protein localises to the kinetochore. Its function is as follows. Plus end-directed microtubule-dependent motor required for spindle assembly and chromosome movement during mitosis. Has microtubule depolymerization activity. Plays a role in chromosome congression. This Mus musculus (Mouse) protein is Kinesin-like protein KIF2B (Kif2b).